Consider the following 567-residue polypeptide: Berberine bridge enzyme-like D-1 (567 aa).

The signal sequence occupies residues 1-33 (MKRNISMFLQLLLIILMMISFLFTSLLVPSVSA). Residues cysteine 42 and cysteine 103 are joined by a disulfide bond. An N-linked (GlcNAc...) asparagine glycan is attached at asparagine 50. The region spanning 81-257 (SKPKPTVIIV…YAWKIRLLKV (177 aa)) is the FAD-binding PCMH-type domain. Position 118 is a pros-8alpha-FAD histidine (histidine 118). N-linked (GlcNAc...) asparagine glycosylation is found at asparagine 364 and asparagine 378.

The protein belongs to the oxygen-dependent FAD-linked oxidoreductase family. It depends on FAD as a cofactor. Mostly expressed in roots at low levels.

It is found in the vacuole. The protein operates within alkaloid biosynthesis; nicotine biosynthesis. Involved in the biosynthesis of pyridine alkaloid natural products, leading mainly to the production of anabasine, anatabine, nicotine and nornicotine, effective deterrents against herbivores with antiparasitic and pesticide properties (neurotoxins); nornicotine serves as the precursor in the synthesis of the carcinogen compound N'-nitrosonornicotine (NNN). Catalyzes a late oxidation step subsequent to the pyridine ring condensation reaction in the biosynthesis of alkaloids. This chain is Berberine bridge enzyme-like D-1, found in Nicotiana tabacum (Common tobacco).